Reading from the N-terminus, the 457-residue chain is Bifunctional protein GlmU (457 aa).

Residues 1 to 229 (MYNCAIILAA…YEEIMGVNSR (229 aa)) form a pyrophosphorylase region. UDP-N-acetyl-alpha-D-glucosamine-binding positions include 8 to 11 (LAAG), lysine 22, glutamine 73, and 78 to 79 (GT). Aspartate 103 lines the Mg(2+) pocket. Positions 140, 155, 170, and 227 each coordinate UDP-N-acetyl-alpha-D-glucosamine. Asparagine 227 is a Mg(2+) binding site. The tract at residues 230 to 250 (VQLSEAEIVMRKRINHKHMVN) is linker. An N-acetyltransferase region spans residues 251-457 (GVTFIDCEST…WLDKKGLLKK (207 aa)). Positions 332 and 350 each coordinate UDP-N-acetyl-alpha-D-glucosamine. The active-site Proton acceptor is histidine 362. Tyrosine 365 and asparagine 376 together coordinate UDP-N-acetyl-alpha-D-glucosamine. Acetyl-CoA contacts are provided by residues 385–386 (NY), alanine 422, and arginine 439.

This sequence in the N-terminal section; belongs to the N-acetylglucosamine-1-phosphate uridyltransferase family. It in the C-terminal section; belongs to the transferase hexapeptide repeat family. Homotrimer. Mg(2+) serves as cofactor.

It localises to the cytoplasm. It carries out the reaction alpha-D-glucosamine 1-phosphate + acetyl-CoA = N-acetyl-alpha-D-glucosamine 1-phosphate + CoA + H(+). The catalysed reaction is N-acetyl-alpha-D-glucosamine 1-phosphate + UTP + H(+) = UDP-N-acetyl-alpha-D-glucosamine + diphosphate. It functions in the pathway nucleotide-sugar biosynthesis; UDP-N-acetyl-alpha-D-glucosamine biosynthesis; N-acetyl-alpha-D-glucosamine 1-phosphate from alpha-D-glucosamine 6-phosphate (route II): step 2/2. It participates in nucleotide-sugar biosynthesis; UDP-N-acetyl-alpha-D-glucosamine biosynthesis; UDP-N-acetyl-alpha-D-glucosamine from N-acetyl-alpha-D-glucosamine 1-phosphate: step 1/1. The protein operates within bacterial outer membrane biogenesis; LPS lipid A biosynthesis. Catalyzes the last two sequential reactions in the de novo biosynthetic pathway for UDP-N-acetylglucosamine (UDP-GlcNAc). The C-terminal domain catalyzes the transfer of acetyl group from acetyl coenzyme A to glucosamine-1-phosphate (GlcN-1-P) to produce N-acetylglucosamine-1-phosphate (GlcNAc-1-P), which is converted into UDP-GlcNAc by the transfer of uridine 5-monophosphate (from uridine 5-triphosphate), a reaction catalyzed by the N-terminal domain. In Clostridium botulinum (strain 657 / Type Ba4), this protein is Bifunctional protein GlmU.